Here is a 384-residue protein sequence, read N- to C-terminus: S-adenosylmethionine synthase (384 aa).

Histidine 15 serves as a coordination point for ATP. Aspartate 17 is a Mg(2+) binding site. Glutamate 43 serves as a coordination point for K(+). Positions 56 and 99 each coordinate L-methionine. The tract at residues 99-109 is flexible loop; that stretch reads QSADINQGVDR. ATP is bound by residues 164 to 166, 230 to 231, aspartate 239, 245 to 246, alanine 262, and lysine 266; these read DAK, RF, and RK. Aspartate 239 provides a ligand contact to L-methionine. Lysine 270 contributes to the L-methionine binding site.

Belongs to the AdoMet synthase family. In terms of assembly, homotetramer; dimer of dimers. The cofactor is Mg(2+). It depends on K(+) as a cofactor.

Its subcellular location is the cytoplasm. It carries out the reaction L-methionine + ATP + H2O = S-adenosyl-L-methionine + phosphate + diphosphate. It participates in amino-acid biosynthesis; S-adenosyl-L-methionine biosynthesis; S-adenosyl-L-methionine from L-methionine: step 1/1. In terms of biological role, catalyzes the formation of S-adenosylmethionine (AdoMet) from methionine and ATP. The overall synthetic reaction is composed of two sequential steps, AdoMet formation and the subsequent tripolyphosphate hydrolysis which occurs prior to release of AdoMet from the enzyme. This chain is S-adenosylmethionine synthase, found in Haemophilus influenzae (strain PittEE).